A 379-amino-acid chain; its full sequence is Succinyl-diaminopimelate desuccinylase (379 aa).

Histidine 70 contributes to the Zn(2+) binding site. Aspartate 72 is a catalytic residue. A Zn(2+)-binding site is contributed by aspartate 103. The active-site Proton acceptor is glutamate 137. The Zn(2+) site is built by glutamate 138, glutamate 166, and histidine 352.

This sequence belongs to the peptidase M20A family. DapE subfamily. In terms of assembly, homodimer. Zn(2+) serves as cofactor. Co(2+) is required as a cofactor.

The enzyme catalyses N-succinyl-(2S,6S)-2,6-diaminopimelate + H2O = (2S,6S)-2,6-diaminopimelate + succinate. Its pathway is amino-acid biosynthesis; L-lysine biosynthesis via DAP pathway; LL-2,6-diaminopimelate from (S)-tetrahydrodipicolinate (succinylase route): step 3/3. Functionally, catalyzes the hydrolysis of N-succinyl-L,L-diaminopimelic acid (SDAP), forming succinate and LL-2,6-diaminopimelate (DAP), an intermediate involved in the bacterial biosynthesis of lysine and meso-diaminopimelic acid, an essential component of bacterial cell walls. This Burkholderia ambifaria (strain MC40-6) protein is Succinyl-diaminopimelate desuccinylase.